Consider the following 313-residue polypeptide: GTP cyclohydrolase MptA (313 aa).

The protein belongs to the GTP cyclohydrolase IV family. As to quaternary structure, homodimer. Fe(2+) serves as cofactor.

The catalysed reaction is GTP + H2O = 7,8-dihydroneopterin 2',3'-cyclic phosphate + formate + diphosphate + H(+). Its pathway is cofactor biosynthesis; 5,6,7,8-tetrahydromethanopterin biosynthesis. Functionally, converts GTP to 7,8-dihydro-D-neopterin 2',3'-cyclic phosphate, the first intermediate in the biosynthesis of coenzyme methanopterin. This chain is GTP cyclohydrolase MptA, found in Methanosphaera stadtmanae (strain ATCC 43021 / DSM 3091 / JCM 11832 / MCB-3).